We begin with the raw amino-acid sequence, 379 residues long: D-threonine aldolase (379 aa).

Lys-59 carries the N6-(pyridoxal phosphate)lysine modification.

This sequence belongs to the DSD1 family. It depends on pyridoxal 5'-phosphate as a cofactor. Mn(2+) is required as a cofactor. Co(2+) serves as cofactor. Requires Ni(2+) as cofactor. The cofactor is Mg(2+).

The catalysed reaction is D-threonine = acetaldehyde + glycine. It catalyses the reaction D-allo-threonine = acetaldehyde + glycine. Its activity is regulated as follows. Inhibited by the carbonyl reagents hydroxylamine, phenylhydrazine and semicarbazide. Inhibited by the chelating agent EDTA. Inhibited by the sulfhydryl reagent p-chloromercuribenzoic acid, and by sodium cyanide. Inhibited by iodoacetate, Ag(2)SO(4), HgCl(2) and CdCl(2). Competitively inhibited by beta-hydroxyaspartate and O-phospho-DL-threonine. Its function is as follows. Catalyzes the reversible cleavage of D-threonine or D-allothreonine into glycine and acetaldehyde. Can also cleave D-beta-phenylserine, D-beta-hydroxy-alpha-aminovaleric acid, D-beta-3,4-dihydroxyphenylserine and D-beta-3,4-methylenedioxyphenylserine into glycine and the corresponding aldehyde compounds. Inactive towards D-serine, beta-hydroxyaspartate and O-phospho-DL-threonine. This is D-threonine aldolase from Arthrobacter sp.